The primary structure comprises 273 residues: Proteasome subunit beta type-7-A (273 aa).

A propeptide spans 1 to 37 (MSQSTVDVPPKGGFSFDLCKRNDMLTQKGLKAPSFLK) (removed in mature form). The Nucleophile role is filled by Thr-40.

This sequence belongs to the peptidase T1B family. Component of the 20S core complex of the 26S proteasome. The 26S proteasome is composed of a core protease (CP), known as the 20S proteasome, capped at one or both ends by the 19S regulatory particle (RP/PA700). The 20S proteasome core is composed of 28 subunits that are arranged in four stacked rings, resulting in a barrel-shaped structure. The two end rings are each formed by seven alpha subunits, and the two central rings are each formed by seven beta subunits. The catalytic chamber with the active sites is on the inside of the barrel.

Its subcellular location is the cytoplasm. It is found in the nucleus. It carries out the reaction Cleavage of peptide bonds with very broad specificity.. Its function is as follows. The proteasome is a multicatalytic proteinase complex which is characterized by its ability to cleave peptides with Arg, Phe, Tyr, Leu, and Glu adjacent to the leaving group at neutral or slightly basic pH. The proteasome has an ATP-dependent proteolytic activity. The polypeptide is Proteasome subunit beta type-7-A (PBB1) (Arabidopsis thaliana (Mouse-ear cress)).